The following is a 152-amino-acid chain: 3-dehydroquinate dehydratase (152 aa).

The active-site Proton acceptor is Y26. 3 residues coordinate substrate: N78, H84, and D91. H104 acts as the Proton donor in catalysis. Substrate is bound by residues 105–106 and R115; that span reads IS.

Belongs to the type-II 3-dehydroquinase family. As to quaternary structure, homododecamer.

The catalysed reaction is 3-dehydroquinate = 3-dehydroshikimate + H2O. It functions in the pathway metabolic intermediate biosynthesis; chorismate biosynthesis; chorismate from D-erythrose 4-phosphate and phosphoenolpyruvate: step 3/7. Catalyzes a trans-dehydration via an enolate intermediate. The protein is 3-dehydroquinate dehydratase of Buchnera aphidicola subsp. Cinara cedri (strain Cc).